Reading from the N-terminus, the 187-residue chain is Cytochrome b-245 chaperone 1 (187 aa).

Residues 20–42 (GIRSWSLLVGILSTGLAAAYYSG) traverse the membrane as a helical segment. Residues 167-187 (ESPSERSQSSDSEPDGPGGQS) are disordered. Phosphoserine is present on residues Ser-168 and Ser-170.

The protein belongs to the CYBC1 family. In terms of assembly, interacts with CYBB; CYBC1 may act as a chaperone stabilizing Cytochrome b-245 heterodimer.

It is found in the endoplasmic reticulum membrane. Its function is as follows. Functions as a chaperone necessary for a stable expression of the CYBA and CYBB subunits of the cytochrome b-245 heterodimer. Controls the phagocyte respiratory burst and is essential for innate immunity. The chain is Cytochrome b-245 chaperone 1 from Rattus norvegicus (Rat).